The sequence spans 731 residues: 1,4-alpha-glucan branching enzyme GlgB (731 aa).

Asp-411 serves as the catalytic Nucleophile. Glu-464 acts as the Proton donor in catalysis.

This sequence belongs to the glycosyl hydrolase 13 family. GlgB subfamily. As to quaternary structure, monomer.

The catalysed reaction is Transfers a segment of a (1-&gt;4)-alpha-D-glucan chain to a primary hydroxy group in a similar glucan chain.. The protein operates within glycan biosynthesis; glycogen biosynthesis. In terms of biological role, catalyzes the formation of the alpha-1,6-glucosidic linkages in glycogen by scission of a 1,4-alpha-linked oligosaccharide from growing alpha-1,4-glucan chains and the subsequent attachment of the oligosaccharide to the alpha-1,6 position. This Mycobacterium tuberculosis (strain ATCC 25177 / H37Ra) protein is 1,4-alpha-glucan branching enzyme GlgB.